The chain runs to 248 residues: Deoxyribose-phosphate aldolase (248 aa).

The active-site Proton donor/acceptor is the Asp117. The active-site Schiff-base intermediate with acetaldehyde is Lys179. Lys208 (proton donor/acceptor) is an active-site residue.

Belongs to the DeoC/FbaB aldolase family. DeoC type 1 subfamily.

The protein resides in the cytoplasm. It catalyses the reaction 2-deoxy-D-ribose 5-phosphate = D-glyceraldehyde 3-phosphate + acetaldehyde. The protein operates within carbohydrate degradation; 2-deoxy-D-ribose 1-phosphate degradation; D-glyceraldehyde 3-phosphate and acetaldehyde from 2-deoxy-alpha-D-ribose 1-phosphate: step 2/2. Catalyzes a reversible aldol reaction between acetaldehyde and D-glyceraldehyde 3-phosphate to generate 2-deoxy-D-ribose 5-phosphate. The chain is Deoxyribose-phosphate aldolase from Thermotoga sp. (strain RQ2).